Consider the following 122-residue polypeptide: Large ribosomal subunit protein uL14 (122 aa).

It belongs to the universal ribosomal protein uL14 family. As to quaternary structure, part of the 50S ribosomal subunit. Forms a cluster with proteins L3 and L19. In the 70S ribosome, L14 and L19 interact and together make contacts with the 16S rRNA in bridges B5 and B8.

Its function is as follows. Binds to 23S rRNA. Forms part of two intersubunit bridges in the 70S ribosome. The sequence is that of Large ribosomal subunit protein uL14 from Fervidobacterium nodosum (strain ATCC 35602 / DSM 5306 / Rt17-B1).